The sequence spans 203 residues: UPF0301 protein Sde_3637 (203 aa).

It belongs to the UPF0301 (AlgH) family.

The chain is UPF0301 protein Sde_3637 from Saccharophagus degradans (strain 2-40 / ATCC 43961 / DSM 17024).